The sequence spans 427 residues: Enolase (427 aa).

Q163 is a (2R)-2-phosphoglycerate binding site. E205 serves as the catalytic Proton donor. Mg(2+) contacts are provided by D242, E285, and D312. The (2R)-2-phosphoglycerate site is built by K337, R366, S367, and K388. The Proton acceptor role is filled by K337.

Belongs to the enolase family. Mg(2+) serves as cofactor.

Its subcellular location is the cytoplasm. It localises to the secreted. The protein localises to the cell surface. It catalyses the reaction (2R)-2-phosphoglycerate = phosphoenolpyruvate + H2O. It functions in the pathway carbohydrate degradation; glycolysis; pyruvate from D-glyceraldehyde 3-phosphate: step 4/5. Functionally, catalyzes the reversible conversion of 2-phosphoglycerate (2-PG) into phosphoenolpyruvate (PEP). It is essential for the degradation of carbohydrates via glycolysis. This Burkholderia lata (strain ATCC 17760 / DSM 23089 / LMG 22485 / NCIMB 9086 / R18194 / 383) protein is Enolase.